Reading from the N-terminus, the 119-residue chain is Ergochrome gene cluster protein CPUR_05426 (119 aa).

It participates in pigment biosynthesis. Part of the ergochrome gene cluster responsible for the typical purple-black color of the ergot sclerotia. The ergochrome gene cluster produces several ergot pigments including the yellow ergochrome secalonic acid and its derivatives, as well as the red anthraquinones endocrocin and clavorubin. The pathway begins with the synthesis of atrochrysone thioester by the polyketide synthase (PKS) CPUR_05437. The atrochrysone carboxyl ACP thioesterase CPUR_05436 then breaks the thioester bond and releases the atrochrysone carboxylic acid from CPUR_05437. The atrochrysone carboxylic acid is then converted to atrochrysone which is further transformed into emodin anthrone. The next step is performed by the anthrone oxygenase CPUR_05434 that catalyzes the oxidation of emodinanthrone to emodin. Emodin is further modified to yield monodictyphenone via several steps involving CPUR_05427, CPUR_05428, CPUR_05429 and CPUR_05430. The short chain dehydrogenase/reductase CPUR_05418 then catalyzes the C-5 ketoreduction to give the xanthone skeleton of the monomeric units. Ergochromes formation requires further dimerization steps of different xanthone units, probably catalyzed by the cytochrome P450 monooxygenase CPUR_05419. CPUR_05425, CPUR_05426 and CPUR_05431 are unique to Claviceps, thus it is likely that they are involved in further modification of xanthone units or in their dimerization. The yellow ergochromes and the red anthraquinone pigments endocrocin and clavorubin are products from the same PKS derived precursors and the latter are likely shunt products in the pathway of xanthone biosynthesis. It is proposed that atrochrysone carboxylic acid released from the PKS CPUR_05437 can also be converted to endocrocin anthrone which is further oxidized into endocrocin by CPUR_05435. Endocrocin could be then modified to clavorubin, possibly by CPUR_05423 and CPUR_05431. Clavorubin is the principal anthraquinone metabolite produced by the cluster with a much higher yield compared to endocrocin. The polypeptide is Ergochrome gene cluster protein CPUR_05426 (Claviceps purpurea (strain 20.1) (Ergot fungus)).